A 353-amino-acid chain; its full sequence is Fe(3+) ions import ATP-binding protein FbpC 1 (353 aa).

The ABC transporter domain occupies 9–239; that stretch reads VVFRNICKQF…PASAFIADFM (231 aa). 41 to 48 is a binding site for ATP; it reads GPSGCGKT.

It belongs to the ABC transporter superfamily. Fe(3+) ion importer (TC 3.A.1.10) family. The complex is composed of two ATP-binding proteins (FbpC), two transmembrane proteins (FbpB) and a solute-binding protein (FbpA).

Its subcellular location is the cell inner membrane. The catalysed reaction is Fe(3+)(out) + ATP + H2O = Fe(3+)(in) + ADP + phosphate + H(+). Part of the ABC transporter complex FbpABC involved in Fe(3+) ions import. Responsible for energy coupling to the transport system. The chain is Fe(3+) ions import ATP-binding protein FbpC 1 from Rhizobium meliloti (strain 1021) (Ensifer meliloti).